Reading from the N-terminus, the 1051-residue chain is Kinesin-like protein KIN-UC (1051 aa).

Low complexity-rich tracts occupy residues 1-12 (MSSSNSSSAVRS), 28-39 (NSNHAVSLSSSS), and 64-90 (SASS…PVRR). 2 disordered regions span residues 1-39 (MSSS…SSSS) and 51-109 (PGIA…RVSV). Residues 104 to 441 (RVRVSVRVRP…IMFGQRAMKI (338 aa)) form the Kinesin motor domain. 189–196 (GQTGTGKT) contacts ATP. The short motif at 411–419 (RTSLIITIG) is the D-BOX element. Coiled coils occupy residues 452–534 (DYES…QKDQ) and 568–761 (DTSQ…KRYM). Over residues 753–766 (NVVEEKRYMKEDLS) the composition is skewed to basic and acidic residues. The tract at residues 753 to 788 (NVVEEKRYMKEDLSKGSAESGAQTGSQRSQGLKKSL) is disordered. The segment covering 772–788 (SGAQTGSQRSQGLKKSL) has biased composition (polar residues). ARM repeat units follow at residues 792-831 (RATM…NLAA), 833-873 (EANQ…NLAM), and 875-915 (EKSQ…NLCG). One copy of the ARM 4; degenerate repeat lies at 917–956 (EKFLKLLKEEEGIKGLLTMAQSGNIDIIAQVARGMANFAK).

This sequence belongs to the TRAFAC class myosin-kinesin ATPase superfamily. Kinesin family. Ungrouped subfamily. In terms of assembly, interacts (via C-terminus) with NEK5. Expressed in young root hair-forming cells and in root hair-producing cells at the boundary between the hypocotyl and root. Expressed in cotyledons, young leaves, trichomes and flowers.

The protein resides in the cytoplasm. It is found in the cytoskeleton. Its subcellular location is the spindle. The protein localises to the phragmoplast. In terms of biological role, acts as a plus-end microtubule-dependent motor protein. Involved in the control of root hair tip growth by promoting microtubule depolymerization and limiting the accumulation of endoplasmic microtubules. In vitro, binds to polymerized actin through ARM repeats, and to polymerized tubulin through N-terminal motor domain. This is Kinesin-like protein KIN-UC from Arabidopsis thaliana (Mouse-ear cress).